We begin with the raw amino-acid sequence, 249 residues long: Ribosomal RNA small subunit methyltransferase J (249 aa).

Residues 101 to 102 (RD), 117 to 118 (ER), 153 to 154 (SS), and D171 contribute to the S-adenosyl-L-methionine site.

This sequence belongs to the methyltransferase superfamily. RsmJ family.

Its subcellular location is the cytoplasm. It carries out the reaction guanosine(1516) in 16S rRNA + S-adenosyl-L-methionine = N(2)-methylguanosine(1516) in 16S rRNA + S-adenosyl-L-homocysteine + H(+). Functionally, specifically methylates the guanosine in position 1516 of 16S rRNA. In Salmonella arizonae (strain ATCC BAA-731 / CDC346-86 / RSK2980), this protein is Ribosomal RNA small subunit methyltransferase J.